The chain runs to 258 residues: Type III pantothenate kinase (258 aa).

6–13 (DVGNTNTV) is an ATP binding site. Residues Tyr-100 and 107-110 (GADR) each bind substrate. The active-site Proton acceptor is the Asp-109. Asp-129 serves as a coordination point for K(+). Thr-132 is a binding site for ATP. Substrate is bound at residue Thr-184.

It belongs to the type III pantothenate kinase family. Homodimer. NH4(+) is required as a cofactor. K(+) serves as cofactor.

It is found in the cytoplasm. The enzyme catalyses (R)-pantothenate + ATP = (R)-4'-phosphopantothenate + ADP + H(+). It functions in the pathway cofactor biosynthesis; coenzyme A biosynthesis; CoA from (R)-pantothenate: step 1/5. In terms of biological role, catalyzes the phosphorylation of pantothenate (Pan), the first step in CoA biosynthesis. The chain is Type III pantothenate kinase from Bacillus velezensis (strain DSM 23117 / BGSC 10A6 / LMG 26770 / FZB42) (Bacillus amyloliquefaciens subsp. plantarum).